A 197-amino-acid chain; its full sequence is Thymidine kinase (197 aa).

ATP-binding positions include 9–16 and 83–86; these read AAMNAGKS and DESQ. E84 acts as the Proton acceptor in catalysis. Residues C141, C143, C178, and C181 each contribute to the Zn(2+) site.

It belongs to the thymidine kinase family. In terms of assembly, homotetramer.

It is found in the cytoplasm. The catalysed reaction is thymidine + ATP = dTMP + ADP + H(+). The chain is Thymidine kinase from Albidiferax ferrireducens (strain ATCC BAA-621 / DSM 15236 / T118) (Rhodoferax ferrireducens).